An 87-amino-acid polypeptide reads, in one-letter code: UPF0250 protein PC1_1177 (87 aa).

Belongs to the UPF0250 family.

The chain is UPF0250 protein PC1_1177 from Pectobacterium carotovorum subsp. carotovorum (strain PC1).